The following is a 618-amino-acid chain: Matrix metalloproteinase-24 (618 aa).

The N-terminal stretch at 1–41 (MPRSRGGRAAPGQAARWSGWRAPGRLLPLLPALCCLAAAAG) is a signal peptide. Residues 42-128 (AGKPAGADAP…HLSRRRRNKR (87 aa)) constitute a propeptide that is removed on maturation. Over 42–575 (AGKPAGADAP…IDDVPGSVNA (534 aa)) the chain is Extracellular. The Cysteine switch signature appears at 110–117 (PRCGVPDH). Zn(2+) is bound by residues Cys112 and His255. Residue Glu256 is part of the active site. Residues His259 and His265 each contribute to the Zn(2+) site. A disordered region spans residues 296–352 (QKIYGPPAEPLEPTRPLPTLPVRRIHSPSERKHERQPRPPRPPLGDRPSTPGAKPNI). Residues 302-314 (PAEPLEPTRPLPT) are compositionally biased toward pro residues. The segment covering 322-332 (SPSERKHERQP) has biased composition (basic and acidic residues). Hemopexin repeat units follow at residues 350 to 398 (PNIC…WKGL), 399 to 444 (PARI…GSCL), 446 to 494 (REGI…KGIP), and 495 to 542 (QAPQ…WMGC). An intrachain disulfide couples Cys353 to Cys542. Residues 576 to 596 (VAVVVPCTLSLCLLVLLYTIF) traverse the membrane as a helical segment. At 597–618 (QFKNKTGPQPVTYYKRPVQEWV) the chain is on the cytoplasmic side. The short motif at 616–618 (EWV) is the PDZ-binding element.

This sequence belongs to the peptidase M10A family. Interacts (via PDZ-binding motif) with APBA3 (via PDZ domain). Interacts with GRIP1 and GRIP2. Requires Zn(2+) as cofactor. It depends on Ca(2+) as a cofactor. In terms of processing, cleaved by a furin endopeptidase in the trans-Golgi network. As to expression, predominantly expressed in the nervous system: while enriched in the central nervous system, expression is also detected in the peripheral nervous system, including the trigeminal ganglion. Expression is not restricted to the nervous system: it is also enriched in the thymus, with a lower level of expression present in the aorta. In brain, high expression is present in the brain parenchyma, particularly within the neocortex.

Its subcellular location is the cell membrane. The protein localises to the golgi apparatus. The protein resides in the trans-Golgi network membrane. It localises to the secreted. It is found in the extracellular space. Its subcellular location is the extracellular matrix. In terms of biological role, metalloprotease that mediates cleavage of N-cadherin (CDH2) and acts as a regulator of neuro-immune interactions and neural stem cell quiescence. Involved in cell-cell interactions between nociceptive neurites and mast cells, possibly by mediating cleavage of CDH2, thereby acting as a mediator of peripheral thermal nociception and inflammatory hyperalgesia. Key regulator of neural stem cells quiescence by mediating cleavage of CDH2, affecting CDH2-mediated anchorage of neural stem cells to ependymocytes in the adult subependymal zone, leading to modulate their quiescence. May play a role in axonal growth. Able to activate progelatinase A. May also be a proteoglycanase involved in degradation of proteoglycans, such as dermatan sulfate and chondroitin sulfate proteoglycans. Cleaves partially fibronectin, but not collagen type I, nor laminin. This chain is Matrix metalloproteinase-24 (Mmp24), found in Rattus norvegicus (Rat).